Consider the following 158-residue polypeptide: Endoribonuclease YbeY (158 aa).

Zn(2+) is bound by residues His122, His126, and His132.

Belongs to the endoribonuclease YbeY family. Zn(2+) serves as cofactor.

It is found in the cytoplasm. Its function is as follows. Single strand-specific metallo-endoribonuclease involved in late-stage 70S ribosome quality control and in maturation of the 3' terminus of the 16S rRNA. This is Endoribonuclease YbeY from Bacillus licheniformis (strain ATCC 14580 / DSM 13 / JCM 2505 / CCUG 7422 / NBRC 12200 / NCIMB 9375 / NCTC 10341 / NRRL NRS-1264 / Gibson 46).